Consider the following 470-residue polypeptide: D-serine/D-alanine/glycine transporter (470 aa).

12 helical membrane passes run 30–50 (LIAI…KTIS), 51–71 (LAGP…FFVM), 102–122 (FTGW…VVAI), 128–148 (FWFP…LLLV), 162–182 (FWFA…GLVM), 211–231 (LSGF…IELV), 256–276 (IIMF…WSSV), 283–303 (FVEL…NFVV), 350–370 (FSCI…SVIG), 371–391 (AFTM…TIIL), 413–433 (PLGK…LVLL), and 441–461 (QALL…LFIG).

The protein belongs to the amino acid-polyamine-organocation (APC) superfamily. Amino acid transporter (AAT) (TC 2.A.3.1) family.

The protein localises to the cell inner membrane. It carries out the reaction D-alanine(in) + H(+)(in) = D-alanine(out) + H(+)(out). The catalysed reaction is D-serine(out) + H(+)(out) = D-serine(in) + H(+)(in). It catalyses the reaction glycine(in) + H(+)(in) = glycine(out) + H(+)(out). The enzyme catalyses D-cycloserine(in) + H(+)(in) = D-cycloserine(out) + H(+)(out). With respect to regulation, uptake of D-serine is inhibited by D-alanine, D-cycloserine, glycine and at high concentrations of D-threonine. Permease that is involved in the transport across the cytoplasmic membrane of D-alanine, D-serine and glycine. Is the only transporter of D-alanine. Transports D-serine less efficiently than DsdX. In addition, in minimal media, transports the broad spectrum antibiotic D-cycloserine into the cell. Transports D-cycloserine only in minimal media, and not in a complex medium, suggesting that CycA does not play a role in D-cycloserine transport when E.coli is grown in a complex or biologically relevant medium, probably due to competition from other CycA substrates present in the medium. The polypeptide is D-serine/D-alanine/glycine transporter (cycA) (Escherichia coli O6:H1 (strain CFT073 / ATCC 700928 / UPEC)).